The primary structure comprises 467 residues: ADAM DEC1 (467 aa).

Residues 1-33 (MLPGTSRLPTEASMSWVLLSVLWLIIQIQVIDA) form the signal peptide. The propeptide occupies 34-208 (TLTPELKPHE…LRTSRSLKNP (175 aa)). N-linked (GlcNAc...) asparagine glycans are attached at residues Asn-61 and Asn-236. The Peptidase M12B domain maps to 217 to 411 (KYIGLFLVLD…RNARCLLLAP (195 aa)). 2 disulfide bridges follow: Cys-327–Cys-406 and Cys-368–Cys-373. His-351 contributes to the Zn(2+) binding site. Residue Glu-352 is part of the active site. His-355 and Asp-361 together coordinate Zn(2+). In terms of domain architecture, Disintegrin spans 418-467 (KPTCGNQVLDVGEECDCGSPEECTNLCCEPLTCRLKSQPDCSEASNHITE).

The cofactor is Zn(2+). Expressed highly in uterus during pregnancy.

Its subcellular location is the secreted. Functionally, may play an important role in the control of the immune response and during pregnancy. The sequence is that of ADAM DEC1 (Adamdec1) from Mus musculus (Mouse).